An 85-amino-acid polypeptide reads, in one-letter code: Serine protease inhibitor Kazal-type 7 (85 aa).

The N-terminal stretch at 1–19 (MKITGGLLLLCTVVYFCSS) is a signal peptide. Residues 26–85 (SPKKVDCSIYKKYPVVAIPCPITYLPVCGSDYITYGNECHLCTESLKSNGRVQFLHDGSC) enclose the Kazal-like domain. Cystine bridges form between Cys-32–Cys-67, Cys-45–Cys-64, and Cys-53–Cys-85.

Its subcellular location is the secreted. Functionally, probable serine protease inhibitor. This chain is Serine protease inhibitor Kazal-type 7 (SPINK7), found in Homo sapiens (Human).